The chain runs to 277 residues: Phosphatidylglycerol--prolipoprotein diacylglyceryl transferase (277 aa).

A run of 4 helical transmembrane segments spans residues 18 to 38 (IAIY…YFMA), 54 to 74 (DLLV…YVIF), 91 to 111 (EGGI…IVFA), and 115 to 135 (GLSF…GQAI). Arg-137 lines the a 1,2-diacyl-sn-glycero-3-phospho-(1'-sn-glycerol) pocket. 3 helical membrane-spanning segments follow: residues 177-197 (QPTF…LLLL), 205-225 (GELF…IEGM), and 236-256 (LRTA…LWVY).

This sequence belongs to the Lgt family.

It is found in the cell membrane. It catalyses the reaction L-cysteinyl-[prolipoprotein] + a 1,2-diacyl-sn-glycero-3-phospho-(1'-sn-glycerol) = an S-1,2-diacyl-sn-glyceryl-L-cysteinyl-[prolipoprotein] + sn-glycerol 1-phosphate + H(+). Its pathway is protein modification; lipoprotein biosynthesis (diacylglyceryl transfer). Functionally, catalyzes the transfer of the diacylglyceryl group from phosphatidylglycerol to the sulfhydryl group of the N-terminal cysteine of a prolipoprotein, the first step in the formation of mature lipoproteins. The polypeptide is Phosphatidylglycerol--prolipoprotein diacylglyceryl transferase (Shouchella clausii (strain KSM-K16) (Alkalihalobacillus clausii)).